The chain runs to 68 residues: Copper transport protein ATOX1 (68 aa).

Residues 1 to 63 (MPKHEFSVDM…TLNKTGKAVS (63 aa)) enclose the HMA domain. The Cu cation site is built by Cys12 and Cys15. Ser47 is modified (phosphoserine). Lys60 is subject to N6-acetyllysine.

The protein belongs to the ATX1 family. Homodimer. Interacts with ATP7B. Interacts with ATP7A. Interacts (via dimer form) with SLC31A1 (via C-terminal domain); this interaction improves ATOX1 stability and controls intracellular Cu(I) levels.

Functionally, binds and deliver cytosolic copper to the copper ATPase proteins. May be important in cellular antioxidant defense. In Rattus norvegicus (Rat), this protein is Copper transport protein ATOX1.